Here is a 236-residue protein sequence, read N- to C-terminus: CD81 protein (236 aa).

At 1-12 the chain is on the cytoplasmic side; the sequence is MGVEGCTKCIKY. The chain crosses the membrane as a helical span at residues 13–33; sequence LLFVFNFVFWLAGGVILGVAL. At 34-63 the chain is on the extracellular side; the sequence is WLRHDPQTTNLLYLELGDKPAPNTFYVGIY. The chain crosses the membrane as a helical span at residues 64–84; the sequence is ILIAVGAVMMFVGFLGCYGAI. At 85-89 the chain is on the cytoplasmic side; sequence QESQC. The chain crosses the membrane as a helical span at residues 90-112; it reads LLGTFFTCLVILFACEVAAGIWG. The Extracellular segment spans residues 113 to 201; sequence FVNKDQIAKD…QKIDELFSGK (89 aa). Intrachain disulfides connect Cys156-Cys190 and Cys157-Cys175. The helical transmembrane segment at 202-224 threads the bilayer; sequence LYLIGIAAIVVAVIMIFEMILSM. A cholesterol-binding site is contributed by Glu219. Over 225–236 the chain is Cytoplasmic; it reads VLCCGIRNSSVY.

It belongs to the tetraspanin (TM4SF) family. Homodimer. Part of a complex composed of CD19, CR2/CD21, CD81 and IFITM1/CD225 in the membrane of mature B cells. Interacts (via the second extracellular domain) with CD19; this interaction is initiated early during biosynthesis in the ER and enables trafficking of only properly folded CD19. Part of a complex that includes MHC class II/HLA-DR molecules and IFITM1. Interacts with IFITM1. Interacts with IFITM2 and IFITM3. Part of integrin-tetraspanin complex composed of CD9, CD81, beta-1 and beta-2 integrins in the membrane of monocyte/macrophages. Interacts (via the second extracellular domain) with integrin ITGAV:ITGB3. Interacts with CD247/CD3 zeta, ICAM1 and CD9 at the immune synapse on T cell membrane. Part of a GPCR-tetraspanin complex consisting at least of ADGRG1, CD81, possibly CD9, and GNA11 in which CD81 enhances the association of ADGRG1 with GNA11. Part of a complex composed of CD9, CD81, PTGFRN and IGSF8. Interacts directly with IGSF8. Interacts with CD53 and SCIMP. Interacts with SAMHD1 (via its C-terminus). Interacts with glypican GPC3 and with the transcriptional repressor HHEX; binding to GPC3 decreases the availability of free CD81 for binding to HHEX, resulting in nuclear translocation of HHEX and transcriptional repression. Interacts with CLDN1. Interacts with CLDN6 and CLDN9. In terms of processing, not glycosylated. Post-translationally, likely constitutively palmitoylated at low levels. Protein palmitoylation is up-regulated upon coligation of BCR and CD9-C2R-CD81 complexes in lipid rafts.

It localises to the cell membrane. It is found in the basolateral cell membrane. Functionally, structural component of specialized membrane microdomains known as tetraspanin-enriched microdomains (TERMs), which act as platforms for receptor clustering and signaling. Essential for trafficking and compartmentalization of CD19 receptor on the surface of activated B cells. Upon initial encounter with microbial pathogens, enables the assembly of CD19-CR2/CD21 and B cell receptor (BCR) complexes at signaling TERMs, lowering the threshold dose of antigen required to trigger B cell clonal expansion and antibody production. In T cells, facilitates the localization of CD247/CD3 zeta at antigen-induced synapses with B cells, providing for costimulation and polarization toward T helper type 2 phenotype. Present in MHC class II compartments, may also play a role in antigen presentation. Can act both as positive and negative regulator of homotypic or heterotypic cell-cell fusion processes. Positively regulates sperm-egg fusion and may be involved in acrosome reaction. In myoblasts, associates with CD9 and PTGFRN and inhibits myotube fusion during muscle regeneration. In macrophages, associates with CD9 and beta-1 and beta-2 integrins, and prevents macrophage fusion into multinucleated giant cells specialized in ingesting complement-opsonized large particles. Also prevents the fusion of mononuclear cell progenitors into osteoclasts in charge of bone resorption. May regulate the compartmentalization of enzymatic activities. In T cells, defines the subcellular localization of dNTPase SAMHD1 and permits its degradation by the proteasome, thereby controlling intracellular dNTP levels. Also involved in cell adhesion and motility. Positively regulates integrin-mediated adhesion of macrophages, particularly relevant for the inflammatory response in the lung. The protein is CD81 protein (CD81) of Saguinus oedipus (Cotton-top tamarin).